The following is a 118-amino-acid chain: ATP-dependent Clp protease adapter protein ClpS (118 aa).

Residues M1–D24 are disordered.

This sequence belongs to the ClpS family. As to quaternary structure, binds to the N-terminal domain of the chaperone ClpA.

In terms of biological role, involved in the modulation of the specificity of the ClpAP-mediated ATP-dependent protein degradation. The protein is ATP-dependent Clp protease adapter protein ClpS of Hyphomonas neptunium (strain ATCC 15444).